A 205-amino-acid polypeptide reads, in one-letter code: H/ACA ribonucleoprotein complex subunit GAR1 (205 aa).

A compositionally biased stretch (gly residues) spans 1–23; that stretch reads MSFRGGNRGGRGGFRGGFRGGRT. The tract at residues 1-31 is disordered; that stretch reads MSFRGGNRGGRGGFRGGFRGGRTGSARSFQQ. Arginine 4 bears the Asymmetric dimethylarginine; by HMT1 mark. The segment at 4-21 is RGG-box 1; that stretch reads RGGNRGGRGGFRGGFRGG. Arginine 8 bears the Asymmetric dimethylarginine; by HMT1; alternate mark. Position 8 is an omega-N-methylarginine; by HMT1; alternate (arginine 8). Arginine 11 carries the asymmetric dimethylarginine; by HMT1 modification. At arginine 15 the chain carries Asymmetric dimethylarginine; by HMT1; alternate. Arginine 15 carries the post-translational modification Omega-N-methylarginine; by HMT1; alternate. Arginine 19 bears the Asymmetric dimethylarginine; by HMT1 mark. Residue lysine 77 forms a Glycyl lysine isopeptide (Lys-Gly) (interchain with G-Cter in ubiquitin) linkage. A disordered region spans residues 124–205; the sequence is PKPKVVGPPK…SRGGFRGGRR (82 aa). Gly residues predominate over residues 143 to 205; the sequence is APGGRGGASM…SRGGFRGGRR (63 aa). An asymmetric dimethylarginine; by HMT1; alternate mark is found at arginine 147, arginine 154, and arginine 158. Omega-N-methylarginine; by HMT1; alternate is present on residues arginine 147, arginine 154, and arginine 158. Residues 147 to 205 are RGG-box 2; sequence RGGASMGRGGSRGGFRGGRGGSSFRGGRGGSSFRGGSRGGSFRGGSRGGSRGGFRGGRR. Arginine 162 carries the post-translational modification Asymmetric dimethylarginine; by HMT1. Asymmetric dimethylarginine; by HMT1; alternate is present on arginine 165. Position 165 is an omega-N-methylarginine; by HMT1; alternate (arginine 165). Asymmetric dimethylarginine; by HMT1 occurs at positions 171 and 174. Residues arginine 180 and arginine 184 each carry the omega-N-methylarginine; by HMT1 modification. Position 189 is an asymmetric dimethylarginine; by HMT1; alternate (arginine 189). An Omega-N-methylarginine; by HMT1; alternate modification is found at arginine 189. Asymmetric dimethylarginine; by HMT1 occurs at positions 193, 197, and 201.

It belongs to the GAR1 family. As to quaternary structure, component of the small nucleolar ribonucleoprotein particles containing H/ACA-type snoRNAs (H/ACA snoRNPs). The protein component of the H/ACA snoRNP contains CBF5, GAR1, NHP2 and NOP10. The complex contains a stable core composed of CBF5 and NOP10, to which GAR1 and NHP2 subsequently bind. Interacts with snoRNAs. In terms of processing, methylated by HMT1, forming asymmetric dimethylarginines (DMA) within a domain referred to as an RGG box, made up of repeated Gly-Gly dipeptides interspersed with Arg and aromatic residues.

The protein resides in the nucleus. It localises to the nucleolus. Functionally, non-catalytic component of the H/ACA small nucleolar ribonucleoprotein (H/ACA snoRNP), which catalyzes pseudouridylation of rRNA and is required for ribosome biogenesis. This involves the isomerization of uridine such that the ribose is subsequently attached to C5, instead of the normal N1. Pseudouridine ('psi') residues may serve to stabilize the conformation of rRNAs. The H/ACA snoRNP complex also mediates pseudouridylation of other types of RNAs. The H/ACA snoRNP complex mediates pseudouridylation at position 93 in U2 snRNA. Essential for growth. The polypeptide is H/ACA ribonucleoprotein complex subunit GAR1 (Saccharomyces cerevisiae (strain ATCC 204508 / S288c) (Baker's yeast)).